The primary structure comprises 89 residues: Small ribosomal subunit protein uS15 (89 aa).

It belongs to the universal ribosomal protein uS15 family. Part of the 30S ribosomal subunit. Forms a bridge to the 50S subunit in the 70S ribosome, contacting the 23S rRNA.

Functionally, one of the primary rRNA binding proteins, it binds directly to 16S rRNA where it helps nucleate assembly of the platform of the 30S subunit by binding and bridging several RNA helices of the 16S rRNA. In terms of biological role, forms an intersubunit bridge (bridge B4) with the 23S rRNA of the 50S subunit in the ribosome. In Nocardia farcinica (strain IFM 10152), this protein is Small ribosomal subunit protein uS15.